The chain runs to 117 residues: MSKIIQQLEAEQMNREVPDFTPGDTVVVQVKVKEGNRERLQAFEGVVIAKRNRGLNSAFTVRKISHGEGVERVFQTYSPAVAEIQVKRRGSVRRAKLYYLRDLTGKAARIKEDIKRG.

It belongs to the bacterial ribosomal protein bL19 family.

Its function is as follows. This protein is located at the 30S-50S ribosomal subunit interface and may play a role in the structure and function of the aminoacyl-tRNA binding site. The chain is Large ribosomal subunit protein bL19 from Thioalkalivibrio sulfidiphilus (strain HL-EbGR7).